The sequence spans 548 residues: Rop guanine nucleotide exchange factor 1 (548 aa).

Residues 1–12 (MGSLSSEEDDEV) are compositionally biased toward acidic residues. Residues 1 to 38 (MGSLSSEEDDEVSSERCGSYSPSADISESESSSSFSCH) are disordered. The span at 19–36 (SYSPSADISESESSSSFS) shows a compositional bias: low complexity. Residues 81 to 462 (DKQPDNDLSE…DAMRRSISVT (382 aa)) enclose the PRONE domain. Residues 458 to 548 (SISVTESLSL…RVTGVTPERD (91 aa)) are involved in auto-inhibition. 2 positions are modified to phosphoserine: S460 and S480.

In terms of assembly, interacts with ARAC10/ROP11 and FER. Forms a complex with ARAC11/ROP1 and PRK2. Interacts in vitro (via PRONE domain) with PRK1, PRK2, PRK3 and PRK4. The C-terminal region is also important for the interaction with PRK2. In terms of processing, phosphorylated at Ser-460 and Ser-480 by PRK2. In terms of tissue distribution, expressed in roots, cotyledons, leaves, stems, sepals, petals, anthers, pollen grains, stigmas and siliques.

The protein resides in the cytoplasm. It localises to the cytosol. Its subcellular location is the cell membrane. Phosphorylation at Ser-460 and Ser-480 by PRK2 releases ROPGEF1 auto-inhibition, thereby activating ROPGEF1, which in turn activates ARAC11/ROP1. In terms of biological role, guanine-nucleotide exchange factor (GEF) that acts as an activator of Rop (Rho of plants) GTPases by promoting the exchange of GDP for GTP. Acts downstream of PRK2 in the control of polarized pollen tube growth by activating ARAC11/ROP1. In association with ROPGEF4, acts as a specific regulator of ARAC10/ROP11 function in ABA-mediated stomatal closure. May play a role in the Rac/Rop-signaling pathway that controls ROS-mediated root hair development. The protein is Rop guanine nucleotide exchange factor 1 (ROPGEF1) of Arabidopsis thaliana (Mouse-ear cress).